Here is a 483-residue protein sequence, read N- to C-terminus: Lipoamide acyltransferase component of branched-chain alpha-keto acid dehydrogenase complex, mitochondrial (483 aa).

The N-terminal 75 residues, 1 to 75 (MIARRIWRSH…AMATDSNSGL (75 aa)), are a transit peptide targeting the mitochondrion. Residues 76 to 150 (IDVPLAQTGE…KVGETLVRLA (75 aa)) enclose the Lipoyl-binding domain. N6-lipoyllysine is present on Lys116. In terms of domain architecture, Peripheral subunit-binding (PSBD) spans 183 to 220 (LSTPAVRNLAKDLGIDINVITGTGKDGRVLKEDVLRFS). Active-site residues include His453 and Asp457.

The protein belongs to the 2-oxoacid dehydrogenase family. As to quaternary structure, forms a 24-polypeptide structural core with octahedral symmetry. It depends on (R)-lipoate as a cofactor. Expressed in the non-photosynthetic organs such as siliques, flowers and roots.

The protein resides in the mitochondrion matrix. It carries out the reaction N(6)-[(R)-dihydrolipoyl]-L-lysyl-[protein] + 2-methylpropanoyl-CoA = N(6)-[(R)-S(8)-2-methylpropanoyldihydrolipoyl]-L-lysyl-[protein] + CoA. Its function is as follows. The branched-chain alpha-keto dehydrogenase complex catalyzes the overall conversion of alpha-keto acids to acyl-CoA and CO(2). It contains multiple copies of three enzymatic components: branched-chain alpha-keto acid decarboxylase (E1), lipoamide acyltransferase (E2) and lipoamide dehydrogenase (E3). Within this complex, the catalytic function of this enzyme is to accept, and to transfer to coenzyme A, acyl groups that are generated by the branched-chain alpha-keto acid decarboxylase component. Required during sugar starvation and acts under the control of a sugar-sensing mechanism involving Ser/Thr kinases and phosphatases. The polypeptide is Lipoamide acyltransferase component of branched-chain alpha-keto acid dehydrogenase complex, mitochondrial (BCE2) (Arabidopsis thaliana (Mouse-ear cress)).